The sequence spans 182 residues: Signal peptidase I (182 aa).

Topologically, residues 1-13 (MTKQKEKRGRRWP) are cytoplasmic. A helical membrane pass occupies residues 14–30 (WFVAVCVVATLRLFVFS). Over 31–182 (NYVVEGKSMM…WPFKQFAFQF (152 aa)) the chain is Extracellular. Residues serine 38 and lysine 79 contribute to the active site.

Belongs to the peptidase S26 family.

The protein resides in the cell membrane. It catalyses the reaction Cleavage of hydrophobic, N-terminal signal or leader sequences from secreted and periplasmic proteins.. This is Signal peptidase I (lepB) from Bacillus caldolyticus.